Here is a 259-residue protein sequence, read N- to C-terminus: 12alpha-hydroxysteroid dehydrogenase (259 aa).

Catalysis depends on Tyr-162, which acts as the Proton acceptor.

This sequence belongs to the short-chain dehydrogenases/reductases (SDR) family. In terms of assembly, homotetramer.

The enzyme catalyses cholate + NADP(+) = 3alpha,7alpha-dihydroxy-12-oxo-5beta-cholanate + NADPH + H(+). It catalyses the reaction deoxycholate + NADP(+) = 12-dehydrodeoxycholate + NADPH + H(+). In terms of biological role, catalyzes the oxidation of the 12alpha-hydroxy group of bile acids, like cholate and deoxycholate. Is also able to catalyze the reverse reaction in vitro. Is likely involved in an epimerization pathway of bile acids that converts hydroxy groups from alpha to beta positions via stable oxo-intermediates, which occurs in the human gut. The protein is 12alpha-hydroxysteroid dehydrogenase of Clostridium sp. (strain ATCC 29733 / VPI C48-50).